The sequence spans 130 residues: Lysozyme C (130 aa).

Positions lysine 2–leucine 130 constitute a C-type lysozyme domain. Intrachain disulfides connect cysteine 7-cysteine 128, cysteine 31-cysteine 116, cysteine 65-cysteine 81, and cysteine 77-cysteine 95. Active-site residues include glutamate 36 and aspartate 53.

It belongs to the glycosyl hydrolase 22 family. In terms of assembly, monomer.

The protein localises to the secreted. The enzyme catalyses Hydrolysis of (1-&gt;4)-beta-linkages between N-acetylmuramic acid and N-acetyl-D-glucosamine residues in a peptidoglycan and between N-acetyl-D-glucosamine residues in chitodextrins.. Functionally, lysozymes have primarily a bacteriolytic function; those in tissues and body fluids are associated with the monocyte-macrophage system and enhance the activity of immunoagents. This Phasianus versicolor (Green pheasant) protein is Lysozyme C (LYZ).